The following is a 490-amino-acid chain: Vacuolar amino acid transporter 7 (490 aa).

Topologically, residues 1-6 (MEATSS) are cytoplasmic. A helical transmembrane segment spans residues 7-27 (ALSSTANLVKTIVGAGTLAIP). Topologically, residues 28-34 (YSFKSDG) are vacuolar. Residues 35–55 (VLVGVILTLLAAVTSGLGLFV) form a helical membrane-spanning segment. The Cytoplasmic segment spans residues 56–84 (LSKCSKTLINPRNSSFFTLCMLTYPTLAP). The helical transmembrane segment at 85-105 (IFDLAMIVQCFGVGLSYLVLI) threads the bilayer. The Vacuolar segment spans residues 106-108 (GDL). The helical transmembrane segment at 109–129 (FPGLFGGERNYWIIASAVIII) threads the bilayer. The Cytoplasmic portion of the chain corresponds to 130 to 143 (PLCLVKKLDQLKYS). The helical transmembrane segment at 144–164 (SILGLFALAYISILVFSHFVF) threads the bilayer. Residues 165-190 (ELGKGELTNILRNDICWWKIHDFKGL) are Vacuolar-facing. A helical membrane pass occupies residues 191 to 211 (LSTFSIIIFAFTGSMNLFPMI). At 212–221 (NELKDNSMEN) the chain is on the cytoplasmic side. Residues 222–242 (ITFVINNSISLSTALFLIVGL) traverse the membrane as a helical segment. The Vacuolar portion of the chain corresponds to 243-264 (SGYLTFGNETLGNLMLNYDPNS). The helical transmembrane segment at 265–285 (IWIVIGKFCLGSMLILSFPLL) threads the bilayer. The Cytoplasmic portion of the chain corresponds to 286–397 (FHPLRIAVNN…FVKSRFYWIT (112 aa)). Residues 355–374 (NGNFDNGSIESQENNNDERG) are disordered. Residues 357–368 (NFDNGSIESQEN) show a composition bias toward polar residues. Residues 398–418 (ALLLISMYTLALSVQSFALVL) traverse the membrane as a helical segment. The Vacuolar portion of the chain corresponds to 419–428 (SFVGATGSTS). A helical membrane pass occupies residues 429–449 (ISFTLPGLLGYKLIGLDSLAI). Topologically, residues 450–463 (GKMIPPKDRFYKRC) are cytoplasmic. A helical membrane pass occupies residues 464 to 484 (SLLLVFYGLSVMFLSLYVTVF). Topologically, residues 485 to 490 (NRSDEA) are vacuolar.

This sequence belongs to the amino acid/polyamine transporter 2 family.

The protein resides in the vacuole membrane. Functionally, probable amino acid transporter of unknown specificity. The polypeptide is Vacuolar amino acid transporter 7 (AVT7) (Saccharomyces cerevisiae (strain ATCC 204508 / S288c) (Baker's yeast)).